Consider the following 702-residue polypeptide: Phosphatase and actin regulator 4 (702 aa).

3 disordered regions span residues Met1–Ser38, Gly82–Gly194, and Asn222–Ala363. One copy of the RPEL 1 repeat lies at Glu63–Pro88. Polar residues predominate over residues Gly106 to Val120. Residues Ser116, Ser118, Ser131, and Ser147 each carry the phosphoserine modification. The span at Ser147 to Ala156 shows a compositional bias: polar residues. Over residues Val163 to Arg173 the composition is skewed to pro residues. Over residues Thr233–Thr250 the composition is skewed to low complexity. Phosphoserine occurs at positions 270 and 291. Positions Pro301 to Thr318 are enriched in polar residues. Ser342 and Ser344 each carry phosphoserine. The span at Ser342 to Pro362 shows a compositional bias: pro residues. Thr358 carries the phosphothreonine modification. Position 427 is a phosphoserine (Ser427). Phosphothreonine is present on Thr432. Phosphoserine is present on residues Ser443, Ser453, and Ser464. The interval Lys473–Ser536 is disordered. Over residues Pro486–Ser497 the composition is skewed to low complexity. A compositionally biased stretch (acidic residues) spans Glu508–Ser518. Residues Ser514, Ser516, Ser557, and Ser590 each carry the phosphoserine modification. RPEL repeat units follow at residues Asn583–Asn608 and Arg621–Glu646. The interval Arg592–Glu615 is disordered. At Ser628 the chain carries Phosphoserine.

This sequence belongs to the phosphatase and actin regulator family. Binds PPP1CA and actin.

Its subcellular location is the cytoplasm. The protein resides in the cell projection. It is found in the lamellipodium. In terms of biological role, regulator of protein phosphatase 1 (PP1) required for neural tube and optic fissure closure, and enteric neural crest cell (ENCCs) migration during development. Acts as an activator of PP1 by interacting with PPP1CA and preventing phosphorylation of PPP1CA at 'Thr-320'. During neural tube closure, localizes to the ventral neural tube and activates PP1, leading to down-regulate cell proliferation within cranial neural tissue and the neural retina. Also acts as a regulator of migration of enteric neural crest cells (ENCCs) by activating PP1, leading to dephosphorylation and subsequent activation of cofilin (COF1 or COF2) and repression of the integrin signaling through the RHO/ROCK pathway. This Pongo abelii (Sumatran orangutan) protein is Phosphatase and actin regulator 4 (PHACTR4).